A 340-amino-acid chain; its full sequence is Probable allantoicase (340 aa).

This sequence belongs to the allantoicase family.

It catalyses the reaction allantoate + H2O = (S)-ureidoglycolate + urea. Its pathway is nitrogen metabolism; (S)-allantoin degradation; (S)-ureidoglycolate from allantoate (aminidohydrolase route): step 1/1. In Rhizobium meliloti (strain 1021) (Ensifer meliloti), this protein is Probable allantoicase.